A 563-amino-acid chain; its full sequence is Arginine--tRNA ligase (563 aa).

This sequence belongs to the class-I aminoacyl-tRNA synthetase family. Monomer.

The enzyme catalyses tRNA(Arg) + L-arginine + ATP = L-arginyl-tRNA(Arg) + AMP + diphosphate. The chain is Arginine--tRNA ligase from Encephalitozoon cuniculi (strain GB-M1) (Microsporidian parasite).